The following is a 230-amino-acid chain: 3-beta-hydroxysteroid-Delta(8),Delta(7)-isomerase (230 aa).

T2 carries the post-translational modification N-acetylthreonine. 4 helical membrane passes run 29–49 (WHIL…TWLL), 66–86 (LCWF…FVLY), 121–141 (METI…IAFL), and 185–205 (FWFY…VLVL). One can recognise an EXPERA domain in the interval 61–204 (WRRLSLCWFA…LWLVLPGVLV (144 aa)).

Belongs to the EBP family.

Its subcellular location is the endoplasmic reticulum membrane. It localises to the nucleus envelope. The protein resides in the cytoplasmic vesicle. It catalyses the reaction lathosterol = 5alpha-cholest-8-en-3beta-ol. It carries out the reaction zymosterol = 5alpha-cholesta-7,24-dien-3beta-ol. The enzyme catalyses 5,6alpha-epoxy-5alpha-cholestan-3beta-ol + H2O = 5alpha-cholestane-3beta,5,6beta-triol. The catalysed reaction is 5,6beta-epoxy-5beta-cholestan-3beta-ol + H2O = 5alpha-cholestane-3beta,5,6beta-triol. The protein operates within steroid biosynthesis; cholesterol biosynthesis. Its activity is regulated as follows. Cholestenol Delta-isomerase and cholesterol-5,6-epoxide hydrolase (ChEH) activities are inhibited by tamoxifen and the selective AEBS ligand (4-benzyl-phenoxy)-ethyl-N-pyrrolidine (PBPE). ChEH activity is inhibited by oleic acid. Isomerase that catalyzes the conversion of Delta(8)-sterols to their corresponding Delta(7)-isomers a catalytic step in the postlanosterol biosynthesis of cholesterol. Functionally, component of the microsomal antiestrogen binding site (AEBS), a multiproteic complex at the ER membrane that consists of an association between EBP and 7-dehydrocholesterol reductase/DHCR7. This complex is responsible for cholesterol-5,6-epoxide hydrolase (ChEH) activity, which consists in the hydration of cholesterol-5,6-epoxides (5,6-EC) into cholestane-3beta,5alpha,6beta-triol (CT). The precise role of each component of this complex has not been described yet. The chain is 3-beta-hydroxysteroid-Delta(8),Delta(7)-isomerase from Homo sapiens (Human).